A 183-amino-acid polypeptide reads, in one-letter code: Ribosome maturation factor RimP (183 aa).

This sequence belongs to the RimP family.

It is found in the cytoplasm. Its function is as follows. Required for maturation of 30S ribosomal subunits. The sequence is that of Ribosome maturation factor RimP from Mycobacterium bovis (strain ATCC BAA-935 / AF2122/97).